A 258-amino-acid chain; its full sequence is tRNA pseudouridine synthase A (258 aa).

The active-site Nucleophile is the D52. Position 110 (Y110) interacts with substrate.

The protein belongs to the tRNA pseudouridine synthase TruA family. Homodimer.

It carries out the reaction uridine(38/39/40) in tRNA = pseudouridine(38/39/40) in tRNA. In terms of biological role, formation of pseudouridine at positions 38, 39 and 40 in the anticodon stem and loop of transfer RNAs. In Francisella tularensis subsp. holarctica (strain FTNF002-00 / FTA), this protein is tRNA pseudouridine synthase A.